We begin with the raw amino-acid sequence, 536 residues long: Lysosomal acid glucosylceramidase (536 aa).

A signal peptide spans 1 to 39; sequence MEFSSPSREECPKPLSRVSIMAGSLTGLLLLQAVSWASG. 2 cysteine pairs are disulfide-bonded: cysteine 43–cysteine 55 and cysteine 57–cysteine 62. Residues asparagine 58, asparagine 98, and asparagine 185 are each glycosylated (N-linked (GlcNAc...) asparagine). Glutamate 274 (proton donor) is an active-site residue. Asparagine 309 carries N-linked (GlcNAc...) asparagine glycosylation. The active-site Nucleophile is the glutamate 379. An N-linked (GlcNAc...) asparagine glycan is attached at asparagine 501.

It belongs to the glycosyl hydrolase 30 family. In terms of assembly, interacts with saposin-C. Interacts with SCARB2. Interacts with TCP1. May interacts with SNCA; this interaction may inhibit the glucosylceramidase activity. Interacts with GRN; this interaction prevents aggregation of GBA1-SCARB2 complex via interaction with HSPA1A upon stress.

It is found in the lysosome membrane. It catalyses the reaction a beta-D-glucosyl-(1&lt;-&gt;1')-N-acylsphing-4-enine + H2O = an N-acylsphing-4-enine + D-glucose. The catalysed reaction is a beta-D-galactosyl-(1&lt;-&gt;1')-N-acylsphing-4-enine + H2O = an N-acylsphing-4-enine + D-galactose. The enzyme catalyses cholesteryl 3-beta-D-glucoside + H2O = cholesterol + D-glucose. It carries out the reaction a beta-D-glucosyl-(1&lt;-&gt;1')-N-acylsphing-4-enine + cholesterol = cholesteryl 3-beta-D-glucoside + an N-acylsphing-4-enine. It catalyses the reaction beta-D-glucosyl-N-(9Z-octadecenoyl)-sphing-4E-enine + cholesterol = N-(9Z-octadecenoyl)-sphing-4-enine + cholesteryl 3-beta-D-glucoside. The catalysed reaction is beta-D-glucosyl-(1&lt;-&gt;1')-N-hexadecanoylsphing-4-enine + cholesterol = cholesteryl 3-beta-D-glucoside + N-hexadecanoylsphing-4-enine. The enzyme catalyses beta-D-glucosyl-N-octanoylsphing-4E-enine + cholesterol = N-octanoylsphing-4-enine + cholesteryl 3-beta-D-glucoside. It carries out the reaction beta-D-glucosyl-N-dodecanoylsphing-4-enine + cholesterol = N-dodecanoylsphing-4-enine + cholesteryl 3-beta-D-glucoside. It catalyses the reaction beta-D-glucosyl-(1&lt;-&gt;1)-N-octadecanoylsphing-4-enine + cholesterol = N-octadecanoylsphing-4-enine + cholesteryl 3-beta-D-glucoside. The catalysed reaction is beta-D-glucosyl-(1&lt;-&gt;1')-N-(15Z-tetracosenoyl)-sphing-4-enine + cholesterol = N-(15Z-tetracosenoyl)-sphing-4-enine + cholesteryl 3-beta-D-glucoside. The enzyme catalyses a beta-D-galactosyl-(1&lt;-&gt;1')-N-acylsphing-4-enine + cholesterol = cholesteryl 3-beta-D-galactoside + an N-acylsphing-4-enine. It carries out the reaction 1-(beta-D-galactosyl)-N-dodecanoylsphing-4-enine + cholesterol = cholesteryl 3-beta-D-galactoside + N-dodecanoylsphing-4-enine. It catalyses the reaction a beta-D-xylosyl-(1&lt;-&gt;1')-N-acylsphing-4-enine + cholesterol = cholesteryl 3-beta-D-xyloside + an N-acylsphing-4-enine. The catalysed reaction is beta-D-xylosyl-(1&lt;-&gt;1')-N-(9Z-octadecenoyl)-sphing-4-enine + cholesterol = cholesteryl 3-beta-D-xyloside + N-(9Z-octadecenoyl)-sphing-4-enine. It participates in steroid metabolism; cholesterol metabolism. Its pathway is sphingolipid metabolism. Its activity is regulated as follows. Synergistically activated by saposin-A and saposin-C, two saposin peptides produced by proteolytic processing of prosaposin/PSAP. Saposin-C activates GBA1 through its recruitment to membranes. The membrane structure and composition in anionic phospholipids are also important for the activation. Activated by PKC in the salvage pathway of ceramide formation. Inhibited by conduritol B epoxide/CBE. Its function is as follows. Glucosylceramidase that catalyzes, within the lysosomal compartment, the hydrolysis of glucosylceramides/GlcCers (such as beta-D-glucosyl-(1&lt;-&gt;1')-N-acylsphing-4-enine) into free ceramides (such as N-acylsphing-4-enine) and glucose. Plays a central role in the degradation of complex lipids and the turnover of cellular membranes. Through the production of ceramides, participates in the PKC-activated salvage pathway of ceramide formation. Catalyzes the glucosylation of cholesterol, through a transglucosylation reaction where glucose is transferred from GlcCer to cholesterol. GlcCer containing mono-unsaturated fatty acids (such as beta-D-glucosyl-N-(9Z-octadecenoyl)-sphing-4-enine) are preferred as glucose donors for cholesterol glucosylation when compared with GlcCer containing same chain length of saturated fatty acids (such as beta-D-glucosyl-N-octadecanoyl-sphing-4-enine). Under specific conditions, may alternatively catalyze the reverse reaction, transferring glucose from cholesteryl 3-beta-D-glucoside to ceramide. Can also hydrolyze cholesteryl 3-beta-D-glucoside producing glucose and cholesterol. Catalyzes the hydrolysis of galactosylceramides/GalCers (such as beta-D-galactosyl-(1&lt;-&gt;1')-N-acylsphing-4-enine), as well as the transfer of galactose between GalCers and cholesterol in vitro, but with lower activity than with GlcCers. Contrary to GlcCer and GalCer, xylosylceramide/XylCer (such as beta-D-xyosyl-(1&lt;-&gt;1')-N-acylsphing-4-enine) is not a good substrate for hydrolysis, however it is a good xylose donor for transxylosylation activity to form cholesteryl 3-beta-D-xyloside. The sequence is that of Lysosomal acid glucosylceramidase from Homo sapiens (Human).